The primary structure comprises 401 residues: UPF0242 protein CCA_01002 (401 aa).

This sequence belongs to the UPF0242 family.

The polypeptide is UPF0242 protein CCA_01002 (Chlamydia caviae (strain ATCC VR-813 / DSM 19441 / 03DC25 / GPIC) (Chlamydophila caviae)).